Reading from the N-terminus, the 1239-residue chain is Structural polyprotein (1239 aa).

The necessary for nucleocapsid assembly and virus assembly stretch occupies residues 1–35 (MFPYPTLNYPPMAPINPMAYRDPNPPRQVAPFRPP). The disordered stretch occupies residues 1–101 (MFPYPTLNYP…RKPKPGKRQR (101 aa)). Pro residues predominate over residues 23–34 (PNPPRQVAPFRP). The host transcription inhibition stretch occupies residues 36-69 (LAAQIEDLRRSIANLTLKQRAPNPPAGPPAKRKK). Positions 43-50 (LRRSIANL) match the Supraphysiological nuclear export signal motif. Asn-49 is a glycosylation site (N-linked (GlcNAc...) asparagine; by host). The Nuclear localization signal signature appears at 66 to 69 (KRKK). The segment covering 79-101 (KKKRPPPPAKKQKRKPKPGKRQR) has biased composition (basic residues). Positions 81–111 (KRPPPPAKKQKRKPKPGKRQRMCMKLESDKT) are binding to the viral RNA. A ribosome-binding region spans residues 96–110 (PGKRQRMCMKLESDK). Ser-108 carries the phosphoserine modification. The 150-residue stretch at 110–259 (KTFPIMLNGQ…KDTPEGSEPW (150 aa)) folds into the Peptidase S3 domain. Position 111 is a phosphothreonine (Thr-111). His-136 functions as the Charge relay system in the catalytic mechanism. Residues 152–157 (KKASIY) are interaction with spike glycoprotein E2. Active-site charge relay system residues include Asp-158 and Ser-210. Residues 244 to 248 (QKGVT) form an interaction with spike glycoprotein E2 region. Residues 260–271 (SLATVMCVLANI) form a functions as an uncleaved signal peptide for the precursor of protein E3/E2 region. Topologically, residues 260 to 681 (SLATVMCVLA…HVVVVYYYNR (422 aa)) are extracellular. 9 disulfide bridges follow: Cys-266–Cys-275, Cys-280–Cys-284, Cys-283–Cys-315, Cys-341–Cys-444, Cys-344–Cys-349, Cys-411–Cys-425, Cys-472–Cys-585, Cys-521–Cys-545, and Cys-523–Cys-539. An N-linked (GlcNAc...) asparagine; by host glycan is attached at Asn-270. N-linked (GlcNAc...) asparagine; by host glycosylation is present at Asn-637. A helical membrane pass occupies residues 682 to 702 (YPLTTIIGLCTCVAIIMVSCD). At 703 to 742 (HPCGSFSGLRNLCITPYKLAPNAQVPILLALLCCIKPTRA) the chain is on the cytoplasmic side. A lipid anchor (S-palmitoyl cysteine; by host) is attached at Cys-705. The tract at residues 710–714 (GLRNL) is interaction with the capsid protein. The interval 714-734 (LCITPYKLAPNAQVPILLALL) is transient transmembrane before p62-6K protein processing. Residues Cys-715, Cys-735, and Cys-736 are each lipidated (S-palmitoyl cysteine; by host). Cys-715 and Cys-736 are disulfide-bonded. Topologically, residues 743 to 754 (DDTLQVLNYLWN) are extracellular. Residues 755–775 (NNQNFFWMQTLIPLAALIVCM) form a helical membrane-spanning segment. Residue Arg-776 is a topological domain, cytoplasmic. The chain crosses the membrane as a helical span at residues 777–797 (MLAALFCCGPAFLLVCGAWAA). The Extracellular segment spans residues 798–1215 (AYEHTAVMPN…WSWLKVLVGG (418 aa)). 4 disulfide bridges follow: Cys-847-Cys-912, Cys-860-Cys-892, Cys-861-Cys-894, and Cys-866-Cys-876. The tract at residues 882–899 (VYPFMWGGAYCFCDTENT) is E1 fusion peptide loop. N-linked (GlcNAc...) asparagine; by host glycans are attached at residues Asn-932 and Asn-1069. 3 cysteine pairs are disulfide-bonded: Cys-1058–Cys-1070, Cys-1100–Cys-1175, and Cys-1105–Cys-1179. A helical transmembrane segment spans residues 1216–1236 (TSAFIVLGLIATAVVALVLFF). At 1237–1239 (HRH) the chain is on the cytoplasmic side.

As to quaternary structure, homodimer. Homomultimer. Interacts with host karyopherin KPNA4; this interaction allows the nuclear import of the viral capsid protein. Interacts with spike glycoprotein E2. Interacts with host IRAK1; the interaction leads to inhibition of IRAK1-dependent signaling. Part of a tetrameric complex composed of host CRM1, host importin alpha/beta dimer and the viral capsid; this complex blocks the receptor-mediated transport through the nuclear pore. Interacts with host phosphatase PPP1CA; this interaction dephosphorylates the capsid protein, which increases its ability to bind to the viral genome. In terms of assembly, the precursor of protein E3/E2 and E1 form a heterodimer shortly after synthesis. The precursor of protein E3/E2 and E1 form a heterodimer shortly after synthesis. Processing of the precursor of protein E3/E2 into E2 and E3 results in a heterodimer of the spike glycoproteins E2 and E1. Spike at virion surface are constituted of three E2-E1 heterodimers. After target cell attachment and endocytosis, E1 change conformation to form homotrimers. E2-E1 heterodimers interact with host VLDLR or LRP8/APOER2 to mediate viral entry. Interacts with 6K protein. As to quaternary structure, interacts with spike glycoprotein E1. Processing of the precursor of protein E3/E2 into E2 and E3 results in a heterodimer of the spike glycoproteins E2 and E1. Spike at virion surface are constituted of a trimer of E2-E1 heterodimers. Interacts with 6K protein. E2-E1 heterodimers interact with host VLDLR or LRP8/APOER2 to mediate viral entry. Interacts (via E2-A) with host VLDLR (via class A repeats); this interaction mediates viral entry into host cell. Interacts with host LRP8/APOER2 (via class A repeats); this interaction mediates viral entry into host cell. In terms of assembly, oligomer. Interacts with spike glycoprotein E1. Interacts with spike glycoprotein E2. Post-translationally, structural polyprotein: Specific enzymatic cleavages in vivo yield mature proteins. Capsid protein is auto-cleaved during polyprotein translation, unmasking a signal peptide at the N-terminus of the precursor of E3/E2. The remaining polyprotein is then targeted to the host endoplasmic reticulum, where host signal peptidase cleaves it into pE2, 6K and E1 proteins. pE2 is further processed to mature E3 and E2 by host furin in trans-Golgi vesicle. Phosphorylated on serine and threonine residues. In terms of processing, palmitoylated via thioester bonds. These palmitoylations may induce disruption of the C-terminus transmembrane. This would result in the reorientation of E2 C-terminus from lumenal to cytoplasmic side. Post-translationally, N-glycosylated. Palmitoylated via thioester bonds.

The protein localises to the virion. Its subcellular location is the host cytoplasm. It localises to the host cell membrane. It is found in the host nucleus. The protein resides in the virion membrane. The protein localises to the host Golgi apparatus. Its subcellular location is the host trans-Golgi network. It localises to the host endoplasmic reticulum. It catalyses the reaction Autocatalytic release of the core protein from the N-terminus of the togavirus structural polyprotein by hydrolysis of a -Trp-|-Ser- bond.. Functionally, forms an icosahedral capsid with a T=4 symmetry composed of 240 copies of the capsid protein surrounded by a lipid membrane through which penetrate 80 spikes composed of trimers of E1-E2 heterodimers. The capsid protein binds to the viral RNA genome at a site adjacent to a ribosome binding site for viral genome translation following genome release. Possesses a protease activity that results in its autocatalytic cleavage from the nascent structural protein. Following its self-cleavage, the capsid protein transiently associates with ribosomes, and within several minutes the protein binds to viral RNA and rapidly assembles into icosahedric core particles. The resulting nucleocapsid eventually associates with the cytoplasmic domain of the spike glycoprotein E2 at the cell membrane, leading to budding and formation of mature virions. In case of infection, new virions attach to target cells and after clathrin-mediated endocytosis their membrane fuses with the host endosomal membrane. This leads to the release of the nucleocapsid into the cytoplasm, followed by an uncoating event necessary for the genomic RNA to become accessible. The uncoating might be triggered by the interaction of capsid proteins with ribosomes. Binding of ribosomes would release the genomic RNA since the same region is genomic RNA-binding and ribosome-binding. Specifically inhibits interleukin-1 receptor-associated kinase 1/IRAK1-dependent signaling during viral entry, representing a means by which the alphaviruses may evade innate immune detection and activation prior to viral gene expression. Inhibits host transcription. Forms a tetrameric complex with XPO1/CRM1 and the nuclear import receptor importin. This complex blocks the central channel of host nuclear pores thereby inhibiting the receptor-mediated nuclear transport and thus the host mRNA and rRNA transcription. The inhibition of transcription is linked to a cytopathic effect on the host cell. Provides the signal sequence for the translocation of the precursor of protein E3/E2 to the host endoplasmic reticulum. Furin-cleaved E3 remains associated with spike glycoprotein E1 and mediates pH protection of the latter during the transport via the secretory pathway. After virion release from the host cell, the assembly protein E3 is gradually released in the extracellular space. In terms of biological role, plays a role in viral attachment to target host cell, by binding to the cell receptors VLDLR or LRP8/APOER2. Synthesized as a p62 precursor which is processed by furin at the cell membrane just before virion budding, giving rise to E2-E1 heterodimer. The p62-E1 heterodimer is stable, whereas E2-E1 is unstable and dissociate at low pH. p62 is processed at the last step, presumably to avoid E1 fusion activation before its final export to cell surface. E2 C-terminus contains a transitory transmembrane that would be disrupted by palmitoylation, resulting in reorientation of the C-terminal tail from lumenal to cytoplasmic side. This step is critical since E2 C-terminus is involved in budding by interacting with capsid proteins. This release of E2 C-terminus in cytoplasm occurs lately in protein export, and precludes premature assembly of particles at the endoplasmic reticulum membrane. Its function is as follows. Acts as a viroporin that participates in virus glycoprotein processing and transport to the plasma membrane, cell permeabilization and budding of viral particles. Disrupts the calcium homeostasis of the cell, probably at the endoplasmic reticulum level. This leads to cytoplasmic calcium elevation. Because of its lipophilic properties, the 6K protein is postulated to influence the selection of lipids that interact with the transmembrane domains of the glycoproteins, which, in turn, affects the deformability of the bilayer required for the extreme curvature that occurs as budding proceeds. Present in low amount in virions, about 3% compared to viral glycoproteins. Functionally, class II viral fusion protein. Fusion activity is inactive as long as E1 is bound to E2 in mature virion. After virus attachment to target cell via host VLDLR or LRP8/APOER2 and endocytosis, acidification of the endosome induces dissociation of E1/E2 heterodimer and concomitant trimerization of the E1 subunits. This E1 trimer is fusion active, and promotes release of viral nucleocapsid in cytoplasm after endosome and viral membrane fusion. Efficient fusion requires the presence of cholesterol and sphingolipid in the target membrane. The chain is Structural polyprotein from Aedes (Human).